The chain runs to 459 residues: Bifunctional protein GlmU (459 aa).

Residues 1 to 230 (MVKRYAVILA…FDETIGINDR (230 aa)) are pyrophosphorylase. Residues 9-12 (LAAG), lysine 23, glutamine 73, and 78-79 (GT) each bind UDP-N-acetyl-alpha-D-glucosamine. Aspartate 103 is a Mg(2+) binding site. Glycine 140, glutamate 155, asparagine 170, and asparagine 228 together coordinate UDP-N-acetyl-alpha-D-glucosamine. Asparagine 228 is a Mg(2+) binding site. The interval 231 to 251 (IALAEAERIMRDRICRQHMKN) is linker. Residues 252–459 (GVTIIDPACT…VDRLRGKKKS (208 aa)) are N-acetyltransferase. Positions 333 and 351 each coordinate UDP-N-acetyl-alpha-D-glucosamine. Histidine 363 serves as the catalytic Proton acceptor. 2 residues coordinate UDP-N-acetyl-alpha-D-glucosamine: tyrosine 366 and asparagine 377. Acetyl-CoA contacts are provided by residues 386–387 (NY), alanine 423, and arginine 440.

This sequence in the N-terminal section; belongs to the N-acetylglucosamine-1-phosphate uridyltransferase family. It in the C-terminal section; belongs to the transferase hexapeptide repeat family. In terms of assembly, homotrimer. Mg(2+) is required as a cofactor.

Its subcellular location is the cytoplasm. The catalysed reaction is alpha-D-glucosamine 1-phosphate + acetyl-CoA = N-acetyl-alpha-D-glucosamine 1-phosphate + CoA + H(+). It catalyses the reaction N-acetyl-alpha-D-glucosamine 1-phosphate + UTP + H(+) = UDP-N-acetyl-alpha-D-glucosamine + diphosphate. It participates in nucleotide-sugar biosynthesis; UDP-N-acetyl-alpha-D-glucosamine biosynthesis; N-acetyl-alpha-D-glucosamine 1-phosphate from alpha-D-glucosamine 6-phosphate (route II): step 2/2. Its pathway is nucleotide-sugar biosynthesis; UDP-N-acetyl-alpha-D-glucosamine biosynthesis; UDP-N-acetyl-alpha-D-glucosamine from N-acetyl-alpha-D-glucosamine 1-phosphate: step 1/1. It functions in the pathway bacterial outer membrane biogenesis; LPS lipid A biosynthesis. Its function is as follows. Catalyzes the last two sequential reactions in the de novo biosynthetic pathway for UDP-N-acetylglucosamine (UDP-GlcNAc). The C-terminal domain catalyzes the transfer of acetyl group from acetyl coenzyme A to glucosamine-1-phosphate (GlcN-1-P) to produce N-acetylglucosamine-1-phosphate (GlcNAc-1-P), which is converted into UDP-GlcNAc by the transfer of uridine 5-monophosphate (from uridine 5-triphosphate), a reaction catalyzed by the N-terminal domain. In Geobacillus thermodenitrificans (strain NG80-2), this protein is Bifunctional protein GlmU.